The chain runs to 203 residues: MKLLHIDSSILGDNSASRQLSSQVTKAWQAAEPSAVVTYRDLAADAISHFSSTTLVAAGTTAELRNAAQQHEAELSATTLAEFITADAIVVAAPMYNFTVPTQLKAWIDRIAVAGQTFRYTEAGPEGLCGGKKVVIVSTAGGIHAGQASGVAHEDYLKLVFGFLGITDIEVVRAEGLAYGEEVRNNAMSAAQAKISEQLFAAA.

Residues Ser-9, 15–17 (SAS), 95–98 (MYNF), and 139–142 (TAGG) contribute to the FMN site.

The protein belongs to the azoreductase type 1 family. As to quaternary structure, homodimer. It depends on FMN as a cofactor.

It catalyses the reaction 2 a quinone + NADH + H(+) = 2 a 1,4-benzosemiquinone + NAD(+). The enzyme catalyses N,N-dimethyl-1,4-phenylenediamine + anthranilate + 2 NAD(+) = 2-(4-dimethylaminophenyl)diazenylbenzoate + 2 NADH + 2 H(+). Functionally, quinone reductase that provides resistance to thiol-specific stress caused by electrophilic quinones. Its function is as follows. Also exhibits azoreductase activity. Catalyzes the reductive cleavage of the azo bond in aromatic azo compounds to the corresponding amines. This is FMN-dependent NADH:quinone oxidoreductase 3 from Pseudomonas fluorescens (strain Pf0-1).